The sequence spans 199 residues: MSVCPAPRSPVRWLHAFTLCLLLAVLAGCVSVPKPMAGAGEDVFSRVGRFAITVTESDGKQQAVQGGFAWRDDGGSYLLDLTNPLGSTEARVEGRPGMAVLTRANGERLAAEHPDALAEDALGSPVPVTGLRDWLRGRLMAGAAPDGLERDAQGRPTAFEQDGWNARLSRYDAQGPQLLVLQRQEPGRRILVRLVITQP.

The signal sequence occupies residues 1–28 (MSVCPAPRSPVRWLHAFTLCLLLAVLAG). C29 is lipidated: N-palmitoyl cysteine. Residue C29 is the site of S-diacylglycerol cysteine attachment.

The protein belongs to the LolB family. Monomer.

It is found in the cell outer membrane. Plays a critical role in the incorporation of lipoproteins in the outer membrane after they are released by the LolA protein. In Bordetella parapertussis (strain 12822 / ATCC BAA-587 / NCTC 13253), this protein is Outer-membrane lipoprotein LolB.